Here is a 239-residue protein sequence, read N- to C-terminus: MNIHLDKHGQGMPLVLFHGWGFDSQIWQPIIPYLKPKYQIILVDLPGFGLTPMMDWESFKKNLFDQLPDKFALAGWSMGGLYATRLAIEEPARVQYLINITSSPRFISDIDWPGVAEEVFVNFYNNLSKDINKTLKEFISLQLNKMKFDFKIGNPPSPEGLAFGLEILGTWDFREQLKQISIPTVYLFGRLDPITPAKTMAIMEKNYPNFKYVLFNRAAHMPFLSHTDLFITMMDEFIK.

Residues Trp-20, 77–78 (SM), and 138–142 (FISLQ) contribute to the substrate site. Ser-77 serves as the catalytic Nucleophile. Residues Asp-192 and His-220 contribute to the active site. His-220 provides a ligand contact to substrate.

Belongs to the AB hydrolase superfamily. Carboxylesterase BioH family. In terms of assembly, monomer.

The protein resides in the cytoplasm. The catalysed reaction is 6-carboxyhexanoyl-[ACP] methyl ester + H2O = 6-carboxyhexanoyl-[ACP] + methanol + H(+). It functions in the pathway cofactor biosynthesis; biotin biosynthesis. Functionally, the physiological role of BioH is to remove the methyl group introduced by BioC when the pimeloyl moiety is complete. It allows to synthesize pimeloyl-ACP via the fatty acid synthetic pathway through the hydrolysis of the ester bonds of pimeloyl-ACP esters. The chain is Pimeloyl-[acyl-carrier protein] methyl ester esterase from Legionella pneumophila (strain Lens).